Consider the following 371-residue polypeptide: Tetraacyldisaccharide 4'-kinase (371 aa).

48–55 provides a ligand contact to ATP; that stretch reads SAGGTGKT.

It belongs to the LpxK family.

The catalysed reaction is a lipid A disaccharide + ATP = a lipid IVA + ADP + H(+). The protein operates within glycolipid biosynthesis; lipid IV(A) biosynthesis; lipid IV(A) from (3R)-3-hydroxytetradecanoyl-[acyl-carrier-protein] and UDP-N-acetyl-alpha-D-glucosamine: step 6/6. Functionally, transfers the gamma-phosphate of ATP to the 4'-position of a tetraacyldisaccharide 1-phosphate intermediate (termed DS-1-P) to form tetraacyldisaccharide 1,4'-bis-phosphate (lipid IVA). This chain is Tetraacyldisaccharide 4'-kinase, found in Chlorobium chlorochromatii (strain CaD3).